The following is a 459-amino-acid chain: Anthocyanidin 3-O-glucoside 2''-O-glucosyltransferase (459 aa).

H20 functions as the Proton acceptor in the catalytic mechanism. H20 lines the an anthocyanidin pocket. The active-site Charge relay is D117. The UDP-alpha-D-glucose site is built by T138, V335, Q337, H352, W355, S357, and E360. G375 serves as a coordination point for an anthocyanidin. Positions 376 and 377 each coordinate UDP-alpha-D-glucose.

This sequence belongs to the UDP-glycosyltransferase family.

The enzyme catalyses an anthocyanidin 3-O-beta-D-glucoside + UDP-alpha-D-glucose = an anthocyanidin 3-O-sophoroside + UDP + 2 H(+). It functions in the pathway pigment biosynthesis; anthocyanin biosynthesis. Glycosyltransferase that mediates the glucosylation of anthocyanidin 3-O-glucosides to yield anthocyanidin 3-O-sophorosides. 3-O-sophoroside derivatives are required for the color of flowers. The protein is Anthocyanidin 3-O-glucoside 2''-O-glucosyltransferase (3GGT) of Ipomoea purpurea (Common morning glory).